Reading from the N-terminus, the 141-residue chain is Large ribosomal subunit protein uL11 (141 aa).

The protein belongs to the universal ribosomal protein uL11 family. Part of the ribosomal stalk of the 50S ribosomal subunit. Interacts with L10 and the large rRNA to form the base of the stalk. L10 forms an elongated spine to which L12 dimers bind in a sequential fashion forming a multimeric L10(L12)X complex. In terms of processing, one or more lysine residues are methylated.

Functionally, forms part of the ribosomal stalk which helps the ribosome interact with GTP-bound translation factors. In Synechococcus sp. (strain JA-3-3Ab) (Cyanobacteria bacterium Yellowstone A-Prime), this protein is Large ribosomal subunit protein uL11.